The chain runs to 724 residues: Propionyl-CoA carboxylase alpha chain, mitochondrial (724 aa).

A Biotin carboxylation domain is found at 48-495; it reads KFDKILIANR…TTKYLPEVYP (448 aa). ATP contacts are provided by residues Lys163, 195–256, Glu247, and Asn282; that span reads SRDI…PRHI. In terms of domain architecture, ATP-grasp spans 167 to 364; sequence KKIATAARVS…IVQQMLRVSY (198 aa). Mg(2+) contacts are provided by Glu322, Glu335, and Asn337. Residues Glu322, Glu335, and Asn337 each coordinate Mn(2+). Residue Arg339 is part of the active site. Phe395 provides a ligand contact to biotin. The 76-residue stretch at 649 to 724 folds into the Biotinyl-binding domain; that stretch reads KAKVDLSTVV…DEGEVLVELE (76 aa). An N6-biotinyllysine modification is found at Lys690.

The holoenzyme is a dodecamer composed of 6 alpha subunits and 6 beta subunits. Interacts with sir-2.2 and sir-2.3. Requires biotin as cofactor. Mg(2+) serves as cofactor. The cofactor is Mn(2+). Post-translationally, the biotin cofactor is covalently attached to the C-terminal biotinyl-binding domain and is required for the catalytic activity.

The protein localises to the mitochondrion matrix. The enzyme catalyses propanoyl-CoA + hydrogencarbonate + ATP = (S)-methylmalonyl-CoA + ADP + phosphate + H(+). It carries out the reaction butanoyl-CoA + hydrogencarbonate + ATP = (2S)-ethylmalonyl-CoA + ADP + phosphate + H(+). It participates in metabolic intermediate metabolism; propanoyl-CoA degradation; succinyl-CoA from propanoyl-CoA: step 1/3. In terms of biological role, this is one of the 2 subunits of the biotin-dependent propionyl-CoA carboxylase (PCC), a mitochondrial enzyme involved in the catabolism of odd chain fatty acids, branched-chain amino acids isoleucine, threonine, methionine, and valine and other metabolites. Propionyl-CoA carboxylase catalyzes the carboxylation of propionyl-CoA/propanoyl-CoA to D-methylmalonyl-CoA/(S)-methylmalonyl-CoA. Within the holoenzyme, the alpha subunit catalyzes the ATP-dependent carboxylation of the biotin carried by the biotin carboxyl carrier (BCC) domain, while the beta subunit then transfers the carboxyl group from carboxylated biotin to propionyl-CoA. Propionyl-CoA carboxylase also significantly acts on butyryl-CoA/butanoyl-CoA, which is converted to ethylmalonyl-CoA/(2S)-ethylmalonyl-CoA. Other alternative minor substrates include (2E)-butenoyl-CoA/crotonoyl-CoA. The chain is Propionyl-CoA carboxylase alpha chain, mitochondrial (pcca-1) from Caenorhabditis elegans.